The following is a 382-amino-acid chain: UDP-N-acetylenolpyruvoylglucosamine reductase (382 aa).

Positions 50-253 (RVGGPAVLAE…REAVLRLRAS (204 aa)) constitute an FAD-binding PCMH-type domain. The active site involves Arg193. The active-site Proton donor is Ser270. Glu374 is an active-site residue.

This sequence belongs to the MurB family. FAD serves as cofactor.

It is found in the cytoplasm. The enzyme catalyses UDP-N-acetyl-alpha-D-muramate + NADP(+) = UDP-N-acetyl-3-O-(1-carboxyvinyl)-alpha-D-glucosamine + NADPH + H(+). It functions in the pathway cell wall biogenesis; peptidoglycan biosynthesis. Functionally, cell wall formation. This chain is UDP-N-acetylenolpyruvoylglucosamine reductase, found in Nocardia farcinica (strain IFM 10152).